A 161-amino-acid polypeptide reads, in one-letter code: Cytochrome c-type biogenesis protein CcmE (161 aa).

Residues 1–8 lie on the Cytoplasmic side of the membrane; that stretch reads MNPRRKKR. A helical; Signal-anchor for type II membrane protein membrane pass occupies residues 9-29; sequence LTLAVALIAGVAAVASLLLYA. At 30-161 the chain is on the periplasmic side; sequence LNSNLNLFYT…TYNQKALEDK (132 aa). Residues His-131 and Tyr-135 each coordinate heme. The disordered stretch occupies residues 142-161; it reads EAMGQTHEKPTYNQKALEDK. The segment covering 147 to 161 has biased composition (basic and acidic residues); sequence THEKPTYNQKALEDK.

This sequence belongs to the CcmE/CycJ family.

The protein resides in the cell inner membrane. Heme chaperone required for the biogenesis of c-type cytochromes. Transiently binds heme delivered by CcmC and transfers the heme to apo-cytochromes in a process facilitated by CcmF and CcmH. In Shewanella frigidimarina (strain NCIMB 400), this protein is Cytochrome c-type biogenesis protein CcmE.